A 76-amino-acid polypeptide reads, in one-letter code: Translational regulator CsrA (76 aa).

The protein belongs to the CsrA/RsmA family. As to quaternary structure, homodimer; the beta-strands of each monomer intercalate to form a hydrophobic core, while the alpha-helices form wings that extend away from the core.

The protein localises to the cytoplasm. Functionally, a translational regulator that binds mRNA to regulate translation initiation and/or mRNA stability. Usually binds in the 5'-UTR at or near the Shine-Dalgarno sequence preventing ribosome-binding, thus repressing translation. Its main target seems to be the major flagellin gene, while its function is anatagonized by FliW. The protein is Translational regulator CsrA of Syntrophomonas wolfei subsp. wolfei (strain DSM 2245B / Goettingen).